A 118-amino-acid chain; its full sequence is Superoxide-generating NADPH oxidase light chain subunit (118 aa).

Transmembrane regions (helical) follow at residues 9-29 (WAAM…IMGI), 36-56 (IAIY…PLSF), 62-82 (AIFH…VLCY), and 83-103 (FLVP…VFLI).

This sequence belongs to the p22phox family. Composed of a heavy chain and a light chain.

It is found in the cell membrane. Functionally, critical component of the membrane-bound oxidase of phagocytes that generates superoxide. The protein is Superoxide-generating NADPH oxidase light chain subunit (cybA) of Dictyostelium discoideum (Social amoeba).